The primary structure comprises 68 residues: uncharacterized protein (68 aa).

The helical transmembrane segment at 24–44 (AHICKCIAMFFVVAGVVLMFF) threads the bilayer.

It is found in the endoplasmic reticulum. The protein localises to the membrane. This is an uncharacterized protein from Saccharomyces cerevisiae (strain ATCC 204508 / S288c) (Baker's yeast).